Reading from the N-terminus, the 187-residue chain is Elongation factor P (187 aa).

Belongs to the elongation factor P family.

Its subcellular location is the cytoplasm. It participates in protein biosynthesis; polypeptide chain elongation. Involved in peptide bond synthesis. Stimulates efficient translation and peptide-bond synthesis on native or reconstituted 70S ribosomes in vitro. Probably functions indirectly by altering the affinity of the ribosome for aminoacyl-tRNA, thus increasing their reactivity as acceptors for peptidyl transferase. This Fusobacterium nucleatum subsp. nucleatum (strain ATCC 25586 / DSM 15643 / BCRC 10681 / CIP 101130 / JCM 8532 / KCTC 2640 / LMG 13131 / VPI 4355) protein is Elongation factor P.